The following is a 467-amino-acid chain: GTPase Der (467 aa).

EngA-type G domains lie at 25 to 188 (PVVA…PEAP) and 199 to 372 (RRVA…ASWE). GTP contacts are provided by residues 31–38 (GRPNVGKS), 78–82 (DTGGW), 140–143 (NKAD), 205–212 (GRPNVGKS), 252–256 (DTAGL), and 317–320 (NKWD). The 83-residue stretch at 373–455 (TRVPTAQLNA…PIEIAVRPRK (83 aa)) folds into the KH-like domain.

Belongs to the TRAFAC class TrmE-Era-EngA-EngB-Septin-like GTPase superfamily. EngA (Der) GTPase family. In terms of assembly, associates with the 50S ribosomal subunit.

Its function is as follows. GTPase that plays an essential role in the late steps of ribosome biogenesis. The sequence is that of GTPase Der from Salinispora arenicola (strain CNS-205).